The primary structure comprises 1312 residues: Multidrug resistance protein 3 (1312 aa).

The chain crosses the membrane as a helical span at residues 51 to 71 (GFIDYILLIGGIIGAMAAGVL). The ABC transmembrane type-1 1 domain maps to 59–369 (IGGIIGAMAA…VAMPINALST (311 aa)). N-linked (GlcNAc...) asparagine glycosylation is present at N98. The next 5 membrane-spanning stretches (helical) occupy residues 127–147 (IYFAIGTTVGMFLMHFCFFVL), 197–217 (KFGVLFQTICGFIAGYAIGFS), 224–244 (LVIMAVTPFMLITVLFLGFFA), 302–322 (VVGVGLGMLLFFMMGSLALGS), and 344–364 (MVVFMSVLMATMSIAQVAMPI). The region spanning 404–643 (IKLEDVQFRY…KATYYGLVKR (240 aa)) is the ABC transporter 1 domain. 439-446 (GASGCGKS) contributes to the ATP binding site. One can recognise an ABC transmembrane type-1 2 domain in the interval 724–1033 (LLSFLGLIGG…LGQMIPDVGK (310 aa)). A run of 2 helical transmembrane segments spans residues 725–745 (LSFLGLIGGIGAGAVFPFYMI) and 776–796 (IWILLFGLAVFVTTYMYLGLF). A glycan (N-linked (GlcNAc...) asparagine) is linked at N819. A run of 3 helical transmembrane segments spans residues 852 to 872 (VGNVVNTLSSVGFGVGIAFYY), 874 to 894 (WKVALCVMAIAPVLIVIVFLN), and 958 to 978 (AFVSAANTFVTSCISAYSFYI). Residues 1068-1307 (IEFKDICFRY…KGFYYTLAMQ (240 aa)) enclose the ABC transporter 2 domain. Position 1103-1110 (1103-1110 (GASGCGKS)) interacts with ATP.

Belongs to the ABC transporter superfamily. ABCB family. Multidrug resistance exporter (TC 3.A.1.201) subfamily.

It is found in the membrane. It carries out the reaction ATP + H2O + xenobioticSide 1 = ADP + phosphate + xenobioticSide 2.. Energy-dependent efflux pump responsible for decreased drug accumulation in multidrug resistance parasites. In Entamoeba histolytica (strain ATCC 30459 / HM-1:IMSS / ABRM), this protein is Multidrug resistance protein 3.